A 445-amino-acid polypeptide reads, in one-letter code: MSDSKEPRVQQLGLLEEDPTTSGIRLFPRDFQFQQIHGHKSSTGCLGHGPLVLQLLSFTLLAGVLVAILVQVSKVPSSLSQEQSEQDTIYQNLTQLKAAVGELSEKSKLQEIYQELTQLKAAVGELPEKSKLQEIYQELTQLKAAVGELPEKSKLQEIYQELTQLKAAVGELPEKSKLQEIYQELTQLKAAVGELPEKSKLQEIYQELTQLKAAVGELPEKSKLQETYQELTQLKAAVGELPEKSKLQEIYQELTQLKAAVGELPEKSELQEIYQELTQLKAALGKLPDQSKQQQIYQELTDLKTAFERLCRHCPKDWTFFQGNCYFMSNSQRNWHNSVTACREVRAQLVVIKSAEEQNFLQLQTSRSNRFSWMGLSDLNQEGTWQWVDGSPLSPSFQRYWNSGEPNNSGNEDCAEFSGSGWNDNRCDIDNYWICKKPAVCFRDE.

Residues 1–49 (MSDSKEPRVQQLGLLEEDPTTSGIRLFPRDFQFQQIHGHKSSTGCLGHG) are Cytoplasmic-facing. An Endocytosis signal motif is present at residues 14–15 (LL). Residues 50–70 (PLVLQLLSFTLLAGVLVAILV) form a helical; Signal-anchor for type II membrane protein membrane-spanning segment. At 71–445 (QVSKVPSSLS…KKPAVCFRDE (375 aa)) the chain is on the extracellular side. A glycan (N-linked (GlcNAc...) asparagine) is linked at N92. 9 repeat units span residues 108 to 130 (KLQE…PEKS), 131 to 151 (KLQE…ELPE), 154 to 176 (KLQE…PEKS), 177 to 199 (KLQE…PEKS), 200 to 222 (KLQE…PEKS), 223 to 245 (KLQE…PEKS), 246 to 268 (KLQE…PEKS), 269 to 291 (ELQE…PDQS), and 292 to 314 (KQQQ…CRHC). Residues 108–315 (KLQEIYQELT…AFERLCRHCP (208 aa)) are 9 X approximate tandem repeats. Cystine bridges form between C311–C441, C314–C325, C342–C435, and C414–C427. Positions 320–436 (FFQGNCYFMS…CDIDNYWICK (117 aa)) constitute a C-type lectin domain. 6 residues coordinate Ca(2+): E405, N407, S409, E412, N423, and D424. N-linked (GlcNAc...) asparagine glycosylation occurs at N407.

In terms of assembly, homotetramer.

It is found in the membrane. Functionally, probable pathogen-recognition receptor involved in peripheral immune surveillance in liver. May mediate the endocytosis of pathogens which are subsequently degraded in lysosomal compartments. Probably recognizes in a calcium-dependent manner high mannose N-linked oligosaccharides in a variety of pathogen antigens. Is a receptor for ICAM3, probably by binding to mannose-like carbohydrates. The sequence is that of C-type lectin domain family 4 member M (CLEC4M) from Pan troglodytes (Chimpanzee).